Reading from the N-terminus, the 108-residue chain is Movement protein (108 aa).

The interval 1–25 (MDASSQYSALPYPQPPRVPSAAPSA) is disordered. The chain crosses the membrane as a helical span at residues 35 to 55 (EIVIFTFVSVLALYLLWLWVL). The interval 73-108 (LIFGPGERPPVASADGSRPVPDPSPPVRRDLDLSRV) is disordered. Residues 99-108 (VRRDLDLSRV) show a composition bias toward basic and acidic residues.

Belongs to the mastrevirus movement protein family. As to quaternary structure, interacts with the capsid protein (CP). Part of a MP-CP-viral DNA complex.

Its subcellular location is the host membrane. Its function is as follows. Involved in the viral transport within, and between cells. In Megathyrsus maximus (PanSV), this protein is Movement protein.